The chain runs to 486 residues: Lipase 1 (486 aa).

Cys58 and Cys82 are disulfide-bonded. Ser193 functions as the Acyl-ester intermediate in the catalytic mechanism. Residue Asp303 is the Charge relay system of the active site. Asn332 carries N-linked (GlcNAc...) asparagine glycosylation. Residue His392 is the Charge relay system of the active site.

This sequence belongs to the type-B carboxylesterase/lipase family.

It catalyses the reaction a triacylglycerol + H2O = a diacylglycerol + a fatty acid + H(+). In Yarrowia lipolytica (strain CLIB 122 / E 150) (Yeast), this protein is Lipase 1 (LIP1).